Reading from the N-terminus, the 580-residue chain is Phosphatase and actin regulator 1 (580 aa).

Residues Ser67 and Ser78 each carry the phosphoserine modification. At Thr104 the chain carries Phosphothreonine. Positions Arg108–Lys129 match the Nuclear localization signal motif. Residues Ala138–Tyr163 form an RPEL 1 repeat. 2 disordered regions span residues Glu331–Gly355 and Lys376–Tyr410. The segment covering Pro335–Leu345 has biased composition (polar residues). The span at Glu395–Ser407 shows a compositional bias: acidic residues. RPEL repeat units follow at residues Asp422–Thr447, Thr460–Arg484, and Arg498–Ser523. A disordered region spans residues Leu462–Arg494. Phosphoserine is present on Ser467. A compositionally biased stretch (basic and acidic residues) spans Thr471–Arg494. Ser505 is subject to Phosphoserine.

It belongs to the phosphatase and actin regulator family. Interacts (via RPEL repeats) with ACTA1 and PPP1CA; ACTA1 and PPP1CA compete for the same binding site. Detected in umbilical vein endothelial cells.

Its subcellular location is the cytoplasm. The protein localises to the synapse. It is found in the nucleus. Functionally, binds actin monomers (G actin) and plays a role in multiple processes including the regulation of actin cytoskeleton dynamics, actin stress fibers formation, cell motility and survival, formation of tubules by endothelial cells, and regulation of PPP1CA activity. Involved in the regulation of cortical neuron migration and dendrite arborization. This Homo sapiens (Human) protein is Phosphatase and actin regulator 1 (PHACTR1).